Here is a 178-residue protein sequence, read N- to C-terminus: Ribosome maturation factor RimM (178 aa).

The PRC barrel domain occupies 101–178; that stretch reads ADEYYWYQLV…VMRVEWDADF (78 aa).

This sequence belongs to the RimM family. In terms of assembly, binds ribosomal protein uS19.

It is found in the cytoplasm. Functionally, an accessory protein needed during the final step in the assembly of 30S ribosomal subunit, possibly for assembly of the head region. Essential for efficient processing of 16S rRNA. May be needed both before and after RbfA during the maturation of 16S rRNA. It has affinity for free ribosomal 30S subunits but not for 70S ribosomes. This chain is Ribosome maturation factor RimM, found in Pseudomonas putida (strain ATCC 47054 / DSM 6125 / CFBP 8728 / NCIMB 11950 / KT2440).